The primary structure comprises 388 residues: Nitric oxide reductase FlRd-NAD(+) reductase (388 aa).

Belongs to the FAD-dependent oxidoreductase family. It depends on FAD as a cofactor.

It is found in the cytoplasm. The enzyme catalyses 2 reduced [nitric oxide reductase rubredoxin domain] + NAD(+) + H(+) = 2 oxidized [nitric oxide reductase rubredoxin domain] + NADH. It functions in the pathway nitrogen metabolism; nitric oxide reduction. One of at least two accessory proteins for anaerobic nitric oxide (NO) reductase. Reduces the rubredoxin moiety of NO reductase. The protein is Nitric oxide reductase FlRd-NAD(+) reductase of Aeromonas hydrophila subsp. hydrophila (strain ATCC 7966 / DSM 30187 / BCRC 13018 / CCUG 14551 / JCM 1027 / KCTC 2358 / NCIMB 9240 / NCTC 8049).